The primary structure comprises 113 residues: uncharacterized protein (113 aa).

Residues 16 to 70 form the HTH cro/C1-type domain; that stretch reads LYEYLEPLDLKINELAELLHVHRNSVSALINNNRKLTTEMAFRLAKVFDTTVDFW. The H-T-H motif DNA-binding region spans 27 to 46; that stretch reads INELAELLHVHRNSVSALIN.

Belongs to the VapA/VapI family.

This is an uncharacterized protein from Escherichia coli O6:H1 (strain CFT073 / ATCC 700928 / UPEC).